A 336-amino-acid polypeptide reads, in one-letter code: Biotin synthase (336 aa).

In terms of domain architecture, Radical SAM core spans 55–288; the sequence is GEAASLHACS…RTIIKFAAGR (234 aa). Residues cysteine 73, cysteine 77, and cysteine 80 each coordinate [4Fe-4S] cluster. [2Fe-2S] cluster is bound by residues cysteine 152, cysteine 213, and lysine 283.

Belongs to the radical SAM superfamily. Biotin synthase family. Homodimer. Requires [4Fe-4S] cluster as cofactor. It depends on [2Fe-2S] cluster as a cofactor.

It catalyses the reaction (4R,5S)-dethiobiotin + (sulfur carrier)-SH + 2 reduced [2Fe-2S]-[ferredoxin] + 2 S-adenosyl-L-methionine = (sulfur carrier)-H + biotin + 2 5'-deoxyadenosine + 2 L-methionine + 2 oxidized [2Fe-2S]-[ferredoxin]. It participates in cofactor biosynthesis; biotin biosynthesis; biotin from 7,8-diaminononanoate: step 2/2. Functionally, catalyzes the conversion of dethiobiotin (DTB) to biotin by the insertion of a sulfur atom into dethiobiotin via a radical-based mechanism. In Chlorobium limicola (strain DSM 245 / NBRC 103803 / 6330), this protein is Biotin synthase.